A 377-amino-acid chain; its full sequence is RIB43A-like with coiled-coils protein 2 (377 aa).

Coiled coils occupy residues 217 to 250 (NKNQ…LRGD) and 282 to 308 (EEIR…RDMD).

It belongs to the RIB43A family. As to quaternary structure, microtubule inner protein component of sperm flagellar doublet microtubules. In terms of tissue distribution, expressed in trachea multiciliated cells.

It is found in the cytoplasm. It localises to the cytoskeleton. Its subcellular location is the cilium axoneme. The protein resides in the flagellum axoneme. Its function is as follows. Microtubule inner protein (MIP) part of the dynein-decorated doublet microtubules (DMTs) in cilia axoneme, which is required for motile cilia beating. The chain is RIB43A-like with coiled-coils protein 2 from Bos taurus (Bovine).